Consider the following 240-residue polypeptide: CD302 antigen (240 aa).

A C-type lectin domain is found at 40–160 (FQDSCYIFLQ…CEVSSVEGTL (121 aa)). The N-linked (GlcNAc...) asparagine glycan is linked to Asn117. Cys136 and Cys151 are oxidised to a cystine. The chain crosses the membrane as a helical span at residues 177-197 (ILISALVIASTVILTVLGAVI). The Cytoplasmic portion of the chain corresponds to 198–240 (WFLYKRNLDSGFTTVFSTAPQSPFNDDCVLVVAEENEYAVQFD).

The protein resides in the membrane. Its subcellular location is the cell projection. It localises to the filopodium. It is found in the cytoplasm. The protein localises to the cell cortex. Functionally, potential multifunctional C-type lectin receptor that may play roles in endocytosis and phagocytosis as well as in cell adhesion and migration. The sequence is that of CD302 antigen from Sus scrofa (Pig).